The sequence spans 231 residues: Two-component response regulator ORR1 (231 aa).

Positions 9-135 (RVLLVDDSPV…DVQRLRKCSP (127 aa)) constitute a Response regulatory domain. 4-aspartylphosphate is present on Asp68.

Belongs to the ARR family. Type-A subfamily. Two-component system major event consists of a His-to-Asp phosphorelay between a sensor histidine kinase (HK) and a response regulator (RR). In plants, the His-to-Asp phosphorelay involves an additional intermediate named Histidine-containing phosphotransfer protein (HPt). This multistep phosphorelay consists of a His-Asp-His-Asp sequential transfer of a phosphate group between first a His and an Asp of the HK protein, followed by the transfer to a conserved His of the HPt protein and finally the transfer to an Asp in the receiver domain of the RR protein. Expressed in mature leaves and flowers, and at low levels in roots and shoots.

Its function is as follows. Functions as a response regulator involved in His-to-Asp phosphorelay signal transduction system. Phosphorylation of the Asp residue in the receiver domain activates the ability of the protein to promote the transcription of target genes. Type-A response regulators seem to act as negative regulators of the cytokinin signaling. The protein is Two-component response regulator ORR1 of Oryza sativa subsp. indica (Rice).